The chain runs to 429 residues: Dihydroorotase (429 aa).

Zn(2+)-binding residues include His61 and His63. Substrate contacts are provided by residues His63–Arg65 and Asn95. Asp153, His180, and His233 together coordinate Zn(2+). Asn279 provides a ligand contact to substrate. Asp306 provides a ligand contact to Zn(2+). Residue Asp306 is part of the active site. Substrate contacts are provided by residues His310 and Phe324–Gly325.

Belongs to the metallo-dependent hydrolases superfamily. DHOase family. Class I DHOase subfamily. It depends on Zn(2+) as a cofactor.

It carries out the reaction (S)-dihydroorotate + H2O = N-carbamoyl-L-aspartate + H(+). It functions in the pathway pyrimidine metabolism; UMP biosynthesis via de novo pathway; (S)-dihydroorotate from bicarbonate: step 3/3. In terms of biological role, catalyzes the reversible cyclization of carbamoyl aspartate to dihydroorotate. This Ligilactobacillus salivarius (strain UCC118) (Lactobacillus salivarius) protein is Dihydroorotase.